A 354-amino-acid chain; its full sequence is Anthranilate phosphoribosyltransferase (354 aa).

5-phospho-alpha-D-ribose 1-diphosphate is bound by residues Gly94, 97-98 (GD), Thr102, 104-107 (NIST), 122-130 (KHGNRAASS), and Ser134. Position 94 (Gly94) interacts with anthranilate. A Mg(2+)-binding site is contributed by Ser106. Position 125 (Asn125) interacts with anthranilate. Arg180 is an anthranilate binding site. Residues Asp238 and Glu239 each contribute to the Mg(2+) site.

Belongs to the anthranilate phosphoribosyltransferase family. As to quaternary structure, homodimer. Mg(2+) is required as a cofactor.

The catalysed reaction is N-(5-phospho-beta-D-ribosyl)anthranilate + diphosphate = 5-phospho-alpha-D-ribose 1-diphosphate + anthranilate. It participates in amino-acid biosynthesis; L-tryptophan biosynthesis; L-tryptophan from chorismate: step 2/5. Catalyzes the transfer of the phosphoribosyl group of 5-phosphorylribose-1-pyrophosphate (PRPP) to anthranilate to yield N-(5'-phosphoribosyl)-anthranilate (PRA). This is Anthranilate phosphoribosyltransferase from Streptomyces avermitilis (strain ATCC 31267 / DSM 46492 / JCM 5070 / NBRC 14893 / NCIMB 12804 / NRRL 8165 / MA-4680).